A 482-amino-acid chain; its full sequence is Sensor histidine kinase CusS (482 aa).

Residues methionine 1–arginine 15 are Cytoplasmic-facing. A helical membrane pass occupies residues leucine 16–isoleucine 36. Topologically, residues histidine 37–lysine 186 are periplasmic. A helical membrane pass occupies residues leucine 187–histidine 207. In terms of domain architecture, HAMP spans histidine 207–threonine 260. Topologically, residues lysine 208–glycine 482 are cytoplasmic. The 215-residue stretch at aspartate 268 to glycine 482 folds into the Histidine kinase domain. Residue histidine 271 is modified to Phosphohistidine; by autocatalysis.

Autophosphorylated.

It localises to the cell inner membrane. It carries out the reaction ATP + protein L-histidine = ADP + protein N-phospho-L-histidine.. In terms of biological role, member of the two-component regulatory system CusS/CusR involved in response to copper and silver. Acts as a copper/silver ion sensor. Activates CusR by phosphorylation. The chain is Sensor histidine kinase CusS (cusS) from Escherichia coli O157:H7.